The sequence spans 27 residues: Natriuretic peptides A (27 aa).

Cysteines 7 and 23 form a disulfide.

This sequence belongs to the natriuretic peptide family.

The protein localises to the secreted. Hormone playing a key role in cardiovascular homeostasis through regulation of natriuresis, diuresis, and vasodilation. Has a cGMP-stimulating activity. This is Natriuretic peptides A (nppa) from Anguilla japonica (Japanese eel).